The sequence spans 379 residues: Alcohol dehydrogenase class-3 (379 aa).

Ser2 is modified (N-acetylserine). Zn(2+) contacts are provided by Cys48, His70, Cys100, Cys103, Cys106, Cys114, and Cys177.

The protein belongs to the zinc-containing alcohol dehydrogenase family. Class-III subfamily. The cofactor is Zn(2+).

The catalysed reaction is a primary alcohol + NAD(+) = an aldehyde + NADH + H(+). It catalyses the reaction a secondary alcohol + NAD(+) = a ketone + NADH + H(+). The enzyme catalyses S-(hydroxymethyl)glutathione + NADP(+) = S-formylglutathione + NADPH + H(+). It carries out the reaction S-(hydroxymethyl)glutathione + NAD(+) = S-formylglutathione + NADH + H(+). The catalysed reaction is octan-1-ol + NAD(+) = octanal + NADH + H(+). Class-III ADH is remarkably ineffective in oxidizing ethanol, but it readily catalyzes the oxidation of long-chain primary alcohols and the oxidation of S-(hydroxymethyl) glutathione. The sequence is that of Alcohol dehydrogenase class-3 (Fdh) from Drosophila melanogaster (Fruit fly).